A 343-amino-acid chain; its full sequence is L-threonine 3-dehydrogenase (343 aa).

Cysteine 38 contacts Zn(2+). Active-site charge relay system residues include threonine 40 and histidine 43. The Zn(2+) site is built by histidine 63, glutamate 64, cysteine 93, cysteine 96, cysteine 99, and cysteine 107. Residues isoleucine 175, aspartate 195, arginine 200, 262–264 (LGI), and 286–287 (IY) each bind NAD(+).

Belongs to the zinc-containing alcohol dehydrogenase family. In terms of assembly, homotetramer. Zn(2+) serves as cofactor.

Its subcellular location is the cytoplasm. It carries out the reaction L-threonine + NAD(+) = (2S)-2-amino-3-oxobutanoate + NADH + H(+). Its pathway is amino-acid degradation; L-threonine degradation via oxydo-reductase pathway; glycine from L-threonine: step 1/2. In terms of biological role, catalyzes the NAD(+)-dependent oxidation of L-threonine to 2-amino-3-ketobutyrate. The chain is L-threonine 3-dehydrogenase from Pectobacterium carotovorum subsp. carotovorum (strain PC1).